We begin with the raw amino-acid sequence, 309 residues long: MLYLSEENKSVSTPCPPDKIIFDAERGEYICSETGEVLEDKIIDQGPEWRAFTPEEKEKRSRVGGPLNNTIHDRGLSTLIDWKDKDAMGRTLDPKRRLEALRWRKWQIRARIQSSIDRNLAQAMNELERIGNLLNLPKSVKDEAALIYRKAVEKGLVRGRSIESVVAAAIYAACRRMKLARTLDEIAQYTKANRKEVARCYRLLLRELDVSVPVSDPKDYVTRIANLLGLSGAVMKTAAEIIDKAKGSGLTAGKDPAGLAAAAIYIASLLHDERRTQKEIAQVAGVTEVTVRNRYKELTQELKISIPTQ.

Repeat copies occupy residues 125 to 208 and 219 to 300.

Belongs to the TFIIB family.

Stabilizes TBP binding to an archaeal box-A promoter. Also responsible for recruiting RNA polymerase II to the pre-initiation complex (DNA-TBP-TFIIB). In Saccharolobus solfataricus (strain ATCC 35092 / DSM 1617 / JCM 11322 / P2) (Sulfolobus solfataricus), this protein is Transcription initiation factor IIB 1.